The sequence spans 750 residues: 3-isopropylmalate dehydratase (750 aa).

3 residues coordinate [4Fe-4S] cluster: Cys353, Cys413, and Cys416. Positions Lys492–Gly524 are disordered.

Belongs to the aconitase/IPM isomerase family. In terms of assembly, monomer. [4Fe-4S] cluster is required as a cofactor.

It carries out the reaction (2R,3S)-3-isopropylmalate = (2S)-2-isopropylmalate. Its pathway is amino-acid biosynthesis; L-leucine biosynthesis; L-leucine from 3-methyl-2-oxobutanoate: step 2/4. In terms of biological role, catalyzes the isomerization between 2-isopropylmalate and 3-isopropylmalate, via the formation of 2-isopropylmaleate. This chain is 3-isopropylmalate dehydratase (LEU1), found in Rhizopus niveus.